The primary structure comprises 1772 residues: MKVIGLLFSFVFFAIKCKSETIEVYNDLIQKLEKLESLSVDGLELFQKSQVIINATQPTETIDPFTNHNFAQQVQDFVTKFEGLGFTEQTELVNLIKALTPNRYGVKYLIESKEEFNGLMHAINFYYDVLRDKLNDMCANNYCEIPEHLKISEEETEMLKKVILGYRKPIENIQDDIEKLEIYIERNKETVAALNALIAEETKKIQPEGNEDCNDASCDSDKYNKKKPIYQAMYNVIFYKKQLAEIQKVVEVLEKRVSTLKKNDAIKPLWQQIEVLNAAPVVTAETQIVTGGQSSTEPGSGGSSASGTSSSGQASAGTGVEQANTVASVTVTPSVGQNGEASTNPQTAQVQPVPTLTLEEKQKKIAGLYAQIKEIAKTIKFNLEGIFVDPIELEYFKKEKKKESCNLSTSSCKKNKASETIIPLTIRYPNGISYPLPENDVYNKIANNAAETTYGDLTHPDNTPLTGDLATNEQARKDLIKAIKKKIKAEEKKLETLKTNYDNKLTEFNQQKTPFKEAAKEFYESKFRNKLTSEIFEKFKTKRDEYMTKKTELNTCEYGNTKELINKLNKQLNYLQDYSLRKDIISNEIEYFSNKKKELQYNINRLAEAVQAKQNVLVASKDVPLSTLVELQIQKSLLTKQIEQLNKTEVSLNKAQLKDKLYVPKTYGNEGKPEPYYLIAVKKEVDRLAQFIPKIESMIAKEKERMEQGPAITGESEEVPSGPSAESSTDRSTQSSTSSSSSSSSTPAAAESSSATLPEAPAPAEAASPSTEASEETTIPPTTQETQPSQAASSTTPAKPVMTKLYYLEKLQKFLVFSYSCHKYVLLQNSTINKDALSKYALTSEEDKIRTLKRCSELDVLLAIQNNMPTMYSLYESIVDGLQNIYTELYEKEMMYHIYKLKDENPSIKSLLVKAGVIEPEPVAAPTPVTPAATEQQQQQATPDVQSDAPAPSDVSQQPETPVTSTTPEVTTSTEASSSAPGEGTPSGEAGASGTEGATASNAATPAGTSASGSAASNASTTSDVTPPAAAAAVPSTSTPAPAQPPAANSQSGNPDSGIRSRAESEEDMPADDFELDNLYKSYLQQIDGNNTEFINFIKSKKELIKALTPEKVNQLYLEIAHLKELSEHYYDRYSTYKLKLERLYNKHEQIQLTNRQIRDLSILKARLLKRKQTLNGVFYILNGYVNFFNKRREAEKQYVDNALKNTDMLLKYYKARTKYFTSEAVPLKTLSKASLDRESNYLKIEKFRAYSRLELRLKKNINLGKERISYVSGGLHHVFEEFKELIKDKDYTGKKNPDNAPEVTNAFEQYKELLPKGVTVSTPAVAVTTTLAADAPATPEGAVPGAVPGAVPGAVPGAVPGAVPGSGTDTRVAGSSVDDNEDDDIYQIASGQSEDAPEKDILSEFTNESLYVYTKRLGSTYKSLKKHMLREFSTIKEDMTNGLNNKSQKRNDFLEVLSHELDLFKDLSTNKYVIRNPYQLLDNDKKDKQIVNLKYATKGINEDIETTTDGIKFFNKMVELYNTQLAAVKEQIATIEAETNDTNKEEKKKYIPILEDLKGLYETVIGQAEEYSEELQNRLDNYKNEKAEFEILTKNLEKYIQIDEKLDEFVEHAENNKHIASIALNNLNKSGLVGEGESKKILAKMLNMDGMDLLGVDPKHVCVDTRDIPKNAGCFRDDNGTEEWRCLLGYKKGEGNTCVENNNPTCDINNGGCDPTASCQNAESTENSKKIICTCKEPTPNAYYEGVFCSSSSFMGLSILLIITLIVFNIF.

The first 18 residues, 1-18 (MKVIGLLFSFVFFAIKCK), serve as a signal peptide directing secretion. Asn54 carries an N-linked (GlcNAc...) asparagine glycan. The disordered stretch occupies residues 290 to 319 (TGGQSSTEPGSGGSSASGTSSSGQASAGTG). Residues 305–319 (ASGTSSSGQASAGTG) are compositionally biased toward low complexity. 2 N-linked (GlcNAc...) asparagine glycosylation sites follow: Asn406 and Asn646. Residues 703–796 (KERMEQGPAI…QPSQAASSTT (94 aa)) are disordered. A compositionally biased stretch (low complexity) spans 724–796 (SAESSTDRST…QPSQAASSTT (73 aa)). N-linked (GlcNAc...) asparagine glycosylation occurs at Asn829. The tract at residues 924 to 1070 (AAPTPVTPAA…SRAESEEDMP (147 aa)) is disordered. Low complexity-rich tracts occupy residues 930-946 (TPAATEQQQQQATPDVQ) and 956-1052 (SQQP…NSQS). N-linked (GlcNAc...) asparagine glycans are attached at residues Asn1018 and Asn1090. The tract at residues 1362 to 1383 (GAVPGSGTDTRVAGSSVDDNED) is disordered. Asn1408, Asn1446, Asn1541, and Asn1629 each carry an N-linked (GlcNAc...) asparagine glycan. 2 consecutive EGF-like domains span residues 1661–1703 (HVCV…VENN) and 1704–1752 (NPTC…FCSS). Residues Cys1663 and Cys1675 are joined by a disulfide bond. A glycan (N-linked (GlcNAc...) asparagine) is linked at Asn1680. 4 disulfide bridges follow: Cys1687/Cys1699, Cys1707/Cys1720, Cys1714/Cys1734, and Cys1736/Cys1750. Ser1751 carries GPI-anchor amidated serine lipidation. The propeptide at 1752–1772 (SSSFMGLSILLIITLIVFNIF) is removed in mature form.

In terms of assembly, forms a complex composed of subunits p83, p30, p38, and p42 which remain non-covalently associated; the complex is formed at the merozoite surface prior to egress from host erythrocytes. Post-translationally, the p230 precursor is cleaved by SUB1 prior to merozoite egress into 4 subunits p83, p30, p38, and p42 which remain non-covalently associated. In a second processing step during erythrocyte invasion, p42 is cleaved by SUB2 into p33 and p19; the latter remains attached to the merozoite surface via its GPI-anchor and stays on the surface during the subsequent ring stage.

It is found in the cell membrane. Its subcellular location is the secreted. In terms of biological role, during the asexual blood stage, involved in merozoite egress from host erythrocytes possibly via its interaction with the host cytoskeleton protein spectrin resulting in the destabilization of the host cytoskeleton and thus leading to erythrocyte cell membrane rupture. Involved in the binding to host erythrocytes and is required for host erythrocyte invasion. This is Merozoite surface protein 1 from Plasmodium yoelii yoelii.